The chain runs to 208 residues: Small ribosomal subunit protein uS4 (208 aa).

One can recognise an S4 RNA-binding domain in the interval 99–165; the sequence is RRLDNVVFQL…PRLKEILSSL (67 aa).

The protein belongs to the universal ribosomal protein uS4 family. As to quaternary structure, part of the 30S ribosomal subunit. Contacts protein S5. The interaction surface between S4 and S5 is involved in control of translational fidelity.

Functionally, one of the primary rRNA binding proteins, it binds directly to 16S rRNA where it nucleates assembly of the body of the 30S subunit. Its function is as follows. With S5 and S12 plays an important role in translational accuracy. This is Small ribosomal subunit protein uS4 from Desulfitobacterium hafniense (strain DSM 10664 / DCB-2).